Consider the following 538-residue polypeptide: Capsular polysaccharide biosynthesis protein RkpI (538 aa).

Transmembrane regions (helical) follow at residues 16 to 36 (LHDY…AVIF), 70 to 90 (VIAL…YAAA), 114 to 134 (LVFS…IFYA), 139 to 159 (IVFW…YMYF), 170 to 190 (LFWV…LFYG), and 212 to 232 (NTVR…WLGV).

It is found in the cell membrane. It participates in capsule biogenesis; capsule polysaccharide biosynthesis. Functionally, involved in antigen K (capsular polysaccharide) biosynthesis. This Rhizobium meliloti (strain 1021) (Ensifer meliloti) protein is Capsular polysaccharide biosynthesis protein RkpI (rkpI).